The chain runs to 729 residues: Polyphosphate kinase (729 aa).

The tract at residues M1–P46 is disordered. The segment covering T25 to A42 has biased composition (low complexity). An ATP-binding site is contributed by N90. Mg(2+) is bound by residues R422 and R452. H482 serves as the catalytic Phosphohistidine intermediate. ATP-binding residues include Y515, R611, and H639.

It belongs to the polyphosphate kinase 1 (PPK1) family. It depends on Mg(2+) as a cofactor. Post-translationally, an intermediate of this reaction is the autophosphorylated ppk in which a phosphate is covalently linked to a histidine residue through a N-P bond.

It catalyses the reaction [phosphate](n) + ATP = [phosphate](n+1) + ADP. Functionally, catalyzes the reversible transfer of the terminal phosphate of ATP to form a long-chain polyphosphate (polyP). This chain is Polyphosphate kinase, found in Mycolicibacterium gilvum (strain PYR-GCK) (Mycobacterium gilvum (strain PYR-GCK)).